The primary structure comprises 85 residues: Small ribosomal subunit protein bS16c (85 aa).

The protein belongs to the bacterial ribosomal protein bS16 family.

Its subcellular location is the plastid. It localises to the chloroplast. The chain is Small ribosomal subunit protein bS16c from Cucumis sativus (Cucumber).